Consider the following 154-residue polypeptide: 17 kDa surface antigen (154 aa).

Positions 1–19 (MKLLSKIMIIALAASMLQA) are cleaved as a signal peptide. Residue Cys-20 is the site of N-palmitoyl cysteine attachment. A lipid anchor (S-diacylglycerol cysteine) is attached at Cys-20.

The protein belongs to the rickettsiale 17 kDa surface antigen family.

The protein localises to the cell outer membrane. The protein is 17 kDa surface antigen (omp) of Rickettsia montanensis.